The sequence spans 469 residues: Proline--tRNA ligase (469 aa).

The protein belongs to the class-II aminoacyl-tRNA synthetase family. ProS type 3 subfamily. Homodimer.

The protein resides in the cytoplasm. It carries out the reaction tRNA(Pro) + L-proline + ATP = L-prolyl-tRNA(Pro) + AMP + diphosphate. Functionally, catalyzes the attachment of proline to tRNA(Pro) in a two-step reaction: proline is first activated by ATP to form Pro-AMP and then transferred to the acceptor end of tRNA(Pro). The chain is Proline--tRNA ligase from Methanobrevibacter smithii (strain ATCC 35061 / DSM 861 / OCM 144 / PS).